We begin with the raw amino-acid sequence, 208 residues long: Uracil phosphoribosyltransferase (208 aa).

Residues R78, R103, and D130–S138 each bind 5-phospho-alpha-D-ribose 1-diphosphate. Uracil is bound by residues I193 and G198–A200. Residue D199 participates in 5-phospho-alpha-D-ribose 1-diphosphate binding.

The protein belongs to the UPRTase family. Requires Mg(2+) as cofactor.

It catalyses the reaction UMP + diphosphate = 5-phospho-alpha-D-ribose 1-diphosphate + uracil. The protein operates within pyrimidine metabolism; UMP biosynthesis via salvage pathway; UMP from uracil: step 1/1. Its activity is regulated as follows. Allosterically activated by GTP. Its function is as follows. Catalyzes the conversion of uracil and 5-phospho-alpha-D-ribose 1-diphosphate (PRPP) to UMP and diphosphate. The protein is Uracil phosphoribosyltransferase of Vibrio parahaemolyticus serotype O3:K6 (strain RIMD 2210633).